The primary structure comprises 513 residues: ATP synthase subunit alpha (513 aa).

169–176 (GDRQTGKT) is an ATP binding site.

Belongs to the ATPase alpha/beta chains family. As to quaternary structure, F-type ATPases have 2 components, CF(1) - the catalytic core - and CF(0) - the membrane proton channel. CF(1) has five subunits: alpha(3), beta(3), gamma(1), delta(1), epsilon(1). CF(0) has three main subunits: a(1), b(2) and c(9-12). The alpha and beta chains form an alternating ring which encloses part of the gamma chain. CF(1) is attached to CF(0) by a central stalk formed by the gamma and epsilon chains, while a peripheral stalk is formed by the delta and b chains.

Its subcellular location is the cell inner membrane. It catalyses the reaction ATP + H2O + 4 H(+)(in) = ADP + phosphate + 5 H(+)(out). In terms of biological role, produces ATP from ADP in the presence of a proton gradient across the membrane. The alpha chain is a regulatory subunit. The protein is ATP synthase subunit alpha of Ruegeria sp. (strain TM1040) (Silicibacter sp.).